A 310-amino-acid polypeptide reads, in one-letter code: Bifunctional phosphoglucose/phosphomannose isomerase (310 aa).

The SIS domain occupies 22–152 (FDGSFRTGTF…IRPKHEDIEE (131 aa)). Residues glycine 41, serine 42, serine 80, serine 82, threonine 85, and arginine 128 each contribute to the D-fructose 6-phosphate site. Glutamate 202 (proton acceptor) is an active-site residue. 2 residues coordinate D-fructose 6-phosphate: histidine 218 and lysine 306. Histidine 218 functions as the Proton donor in the catalytic mechanism. Lysine 306 (proton acceptor) is an active-site residue.

It belongs to the PGI/PMI family. As to quaternary structure, homodimer.

It catalyses the reaction alpha-D-glucose 6-phosphate = beta-D-fructose 6-phosphate. The enzyme catalyses D-mannose 6-phosphate = D-fructose 6-phosphate. With respect to regulation, inhibited by low concentrations of erythrose 4-phosphate and 6-phosphogluconate. In terms of biological role, dual specificity isomerase that catalyzes the isomerization of both glucose-6-phosphate and mannose-6-phosphate to fructose-6-phosphate with similar catalytic efficiency. The polypeptide is Bifunctional phosphoglucose/phosphomannose isomerase (Thermoplasma acidophilum (strain ATCC 25905 / DSM 1728 / JCM 9062 / NBRC 15155 / AMRC-C165)).